The sequence spans 315 residues: Protoheme IX farnesyltransferase (315 aa).

Helical transmembrane passes span 21–41 (YFAL…LVGL), 52–74 (VGFC…NMWW), 98–118 (GEAL…LALA), 121–141 (LLAA…YSMW), 150–170 (IVIG…AATG), 177–197 (VLMF…LALF), 223–243 (ILVY…TPVA), 246–266 (LYLA…WDIW), and 284–304 (FFKF…AEAI).

The protein belongs to the UbiA prenyltransferase family. Protoheme IX farnesyltransferase subfamily. As to quaternary structure, interacts with CtaA.

The protein resides in the cell inner membrane. The enzyme catalyses heme b + (2E,6E)-farnesyl diphosphate + H2O = Fe(II)-heme o + diphosphate. It participates in porphyrin-containing compound metabolism; heme O biosynthesis; heme O from protoheme: step 1/1. In terms of biological role, converts heme B (protoheme IX) to heme O by substitution of the vinyl group on carbon 2 of heme B porphyrin ring with a hydroxyethyl farnesyl side group. The protein is Protoheme IX farnesyltransferase of Dinoroseobacter shibae (strain DSM 16493 / NCIMB 14021 / DFL 12).